The chain runs to 490 residues: MAIILCFLILLPLILIFLKKLKHSKWKLPPGPPKLPFIGNLHQLQELPPRNLNHKYGPVILLRFGFVPLVVISSKEAAEEVLKIHDLECCSRPETAGTRKISYNFKDIGFAPYGEEWKAMRKLSVVELFTAKKHQYFRSIREEENDLLVKKLTELALTRSPVNLKKTLFTLVGSIVCRIGFGFNLHECEFIDENSISDLVDKSEILEMTSMFSDFFPGGIGRFIDWISGQNKRFDNVFSDLDTFFQNILDYHLKPGRKVADSSDIIDVVINMIKKQEKDGDSFKLTTDHLKGMISDIFLAGVSTSASTLIWAITELVRNRKVMKKVQEEIRTTLGDKKERITEQDLTNLHYFKLVVKEIFRLHPAVPFLLPRETLSHVKIQGYDIPAKTQIMINVYAIARDPKLWTNPDEFNPDRFLDSSIDYKGLNFELLPFGSGRRICPGMTMGITLVEFALLNLLYFFDWGLPEKEEADKIITGNGVAVGLVQVLLH.

A helical transmembrane segment spans residues 1–21 (MAIILCFLILLPLILIFLKKL). Residue C440 coordinates heme.

This sequence belongs to the cytochrome P450 family. It depends on heme as a cofactor.

The protein resides in the membrane. The sequence is that of Cytochrome P450 71B29 (CYP71B29) from Arabidopsis thaliana (Mouse-ear cress).